A 319-amino-acid polypeptide reads, in one-letter code: R-phycoerythrin gamma chain, chloroplastic (319 aa).

Residues 1 to 71 constitute a chloroplast transit peptide; sequence MDSPAFAVTG…RPKKLASYKR (71 aa). 2 residues coordinate phycourobilin: cysteine 96 and cysteine 135. Cysteine 212 is a binding site for (2R,3E)-phycoerythrobilin. Residue cysteine 299 participates in phycourobilin binding.

As to quaternary structure, heteromer of 4 alpha, 4 beta and one gamma chains. In terms of processing, contains four covalently linked bilin chromophores.

The protein resides in the plastid. It is found in the chloroplast thylakoid membrane. The sequence is that of R-phycoerythrin gamma chain, chloroplastic from Corallina officinalis (Coral seaweed).